The sequence spans 256 residues: Acetyl-coenzyme A carboxylase carboxyl transferase subunit alpha (256 aa).

A CoA carboxyltransferase C-terminal domain is found at 1 to 236; that stretch reads MTDVARILKE…KSHLIDEITQ (236 aa).

The protein belongs to the AccA family. In terms of assembly, acetyl-CoA carboxylase is a heterohexamer composed of biotin carboxyl carrier protein (AccB), biotin carboxylase (AccC) and two subunits each of ACCase subunit alpha (AccA) and ACCase subunit beta (AccD).

It is found in the cytoplasm. It carries out the reaction N(6)-carboxybiotinyl-L-lysyl-[protein] + acetyl-CoA = N(6)-biotinyl-L-lysyl-[protein] + malonyl-CoA. It functions in the pathway lipid metabolism; malonyl-CoA biosynthesis; malonyl-CoA from acetyl-CoA: step 1/1. Functionally, component of the acetyl coenzyme A carboxylase (ACC) complex. First, biotin carboxylase catalyzes the carboxylation of biotin on its carrier protein (BCCP) and then the CO(2) group is transferred by the carboxyltransferase to acetyl-CoA to form malonyl-CoA. The chain is Acetyl-coenzyme A carboxylase carboxyl transferase subunit alpha from Streptococcus equi subsp. equi (strain 4047).